The following is a 432-amino-acid chain: UDP-N-acetylglucosamine 1-carboxyvinyltransferase (432 aa).

22–23 provides a ligand contact to phosphoenolpyruvate; it reads KN. UDP-N-acetyl-alpha-D-glucosamine is bound at residue Arg-101. Residue Cys-125 is the Proton donor of the active site. 2-(S-cysteinyl)pyruvic acid O-phosphothioketal is present on Cys-125. UDP-N-acetyl-alpha-D-glucosamine-binding positions include 130–134, Asp-315, and Ile-337; that span reads RPVDL.

It belongs to the EPSP synthase family. MurA subfamily.

It localises to the cytoplasm. The enzyme catalyses phosphoenolpyruvate + UDP-N-acetyl-alpha-D-glucosamine = UDP-N-acetyl-3-O-(1-carboxyvinyl)-alpha-D-glucosamine + phosphate. It functions in the pathway cell wall biogenesis; peptidoglycan biosynthesis. Its function is as follows. Cell wall formation. Adds enolpyruvyl to UDP-N-acetylglucosamine. The chain is UDP-N-acetylglucosamine 1-carboxyvinyltransferase from Paramagnetospirillum magneticum (strain ATCC 700264 / AMB-1) (Magnetospirillum magneticum).